A 218-amino-acid chain; its full sequence is uncharacterized protein (218 aa).

The first 21 residues, 1–21 (MKKFVYKYSFGALLLLSGLSS), serve as a signal peptide directing secretion. The N-palmitoyl cysteine moiety is linked to residue C22. C22 carries the S-diacylglycerol cysteine lipid modification.

Belongs to the chlamydial CPn_0875/CT_734/TC_0107 family.

The protein localises to the cell membrane. This is an uncharacterized protein from Chlamydia muridarum (strain MoPn / Nigg).